The following is a 125-amino-acid chain: MPTINQLVRKPRVSEKLKSKSPALENCPQRRGVCTRVYTTTPKKPNSALRKVAKVRLTNGFEVISYIGGEGHNLQEHSVVLIRGGRVKDLPGVRYHIVRGSLDLQGVKDRKQARSKYGAKRPKAA.

Aspartate 89 carries the post-translational modification 3-methylthioaspartic acid.

It belongs to the universal ribosomal protein uS12 family. As to quaternary structure, part of the 30S ribosomal subunit. Contacts proteins S8 and S17. May interact with IF1 in the 30S initiation complex.

In terms of biological role, with S4 and S5 plays an important role in translational accuracy. Interacts with and stabilizes bases of the 16S rRNA that are involved in tRNA selection in the A site and with the mRNA backbone. Located at the interface of the 30S and 50S subunits, it traverses the body of the 30S subunit contacting proteins on the other side and probably holding the rRNA structure together. The combined cluster of proteins S8, S12 and S17 appears to hold together the shoulder and platform of the 30S subunit. This chain is Small ribosomal subunit protein uS12, found in Ralstonia nicotianae (strain ATCC BAA-1114 / GMI1000) (Ralstonia solanacearum).